The chain runs to 268 residues: Tryptophan synthase alpha chain (268 aa).

Catalysis depends on proton acceptor residues Glu49 and Asp60.

Belongs to the TrpA family. In terms of assembly, tetramer of two alpha and two beta chains.

It catalyses the reaction (1S,2R)-1-C-(indol-3-yl)glycerol 3-phosphate + L-serine = D-glyceraldehyde 3-phosphate + L-tryptophan + H2O. Its pathway is amino-acid biosynthesis; L-tryptophan biosynthesis; L-tryptophan from chorismate: step 5/5. In terms of biological role, the alpha subunit is responsible for the aldol cleavage of indoleglycerol phosphate to indole and glyceraldehyde 3-phosphate. This Xanthomonas oryzae pv. oryzae (strain PXO99A) protein is Tryptophan synthase alpha chain.